Consider the following 585-residue polypeptide: Mitochondrial sodium/calcium exchanger protein (585 aa).

The signal sequence occupies residues 1 to 26 (MASRWLALLWAPVFLCVALILETASG). At 27 to 95 (TGDPSTKAHG…GIFCYFPPNL (69 aa)) the chain is on the extracellular side. N-linked (GlcNAc...) asparagine glycosylation occurs at asparagine 46. The chain crosses the membrane as a helical span at residues 96–116 (LPLAITLYVFWLLYLFLILGV). The Cytoplasmic segment spans residues 117–140 (TAAKFFCPNLSAISTNLKLSHNVA). Residues 141–161 (GVTFLAFGNGAPDIFSALVAF) form a helical membrane-spanning segment. Residues 162 to 168 (SDPRTAG) are Extracellular-facing. Residues 169–189 (LAIGALFGAGVLVTTVVAGGI) traverse the membrane as a helical segment. Over 190–205 (TILHPFMAASRPFLRD) the chain is Cytoplasmic. A helical membrane pass occupies residues 206 to 226 (IAFYMVAVFLTFTALYLGRIT). The Extracellular segment spans residues 227 to 229 (LTW). The chain crosses the membrane as a helical span at residues 230–250 (ALGYLGLYVFYVVTVIICTWV). Topologically, residues 251-325 (YQRQRSRSLV…KWRTQSISWR (75 aa)) are cytoplasmic. Position 258 is a phosphoserine; by PKA (serine 258). The helical transmembrane segment at 326-346 (VLKVVKLPVEFLLLLTVPVVD) threads the bilayer. Residues 347 to 360 (PDKDDRNWKRPLNC) are Extracellular-facing. Residues 361 to 381 (LQLVISPLVLVLTLQSGVYGI) form a helical membrane-spanning segment. Over 382–383 (YE) the chain is Cytoplasmic. Residues 384–404 (IGGLLPVWAVVVIVGTALASV) traverse the membrane as a helical segment. Residues 405–416 (TFFATSNREPPR) lie on the Extracellular side of the membrane. A helical transmembrane segment spans residues 417–437 (LHWLFAFLGFLTSALWINAAA). Residues 438–445 (TEVVNILR) lie on the Cytoplasmic side of the membrane. Residues 446–466 (SLGVIFRLSNTVLGLTLLAWG) traverse the membrane as a helical segment. The Extracellular portion of the chain corresponds to 467 to 491 (NSIGDAFSDFTLARQGYPRMAFSAC). The helical transmembrane segment at 492–512 (FGGIIFNILVGVGLGCLLQII) threads the bilayer. Residues 513–525 (RNHVVEVKLEPDG) lie on the Cytoplasmic side of the membrane. The chain crosses the membrane as a helical span at residues 526–546 (LLVWVLASALGLSLIFSLVSV). The Extracellular portion of the chain corresponds to 547–559 (PLQCFQLSKAYGL). The chain crosses the membrane as a helical span at residues 560–580 (CLLLFYICFLVVVLLTEFGVI). The Cytoplasmic portion of the chain corresponds to 581-585 (HLKKA).

This sequence belongs to the Ca(2+):cation antiporter (CaCA) (TC 2.A.19) family. SLC24A subfamily. Post-translationally, phosphorylation at Ser-258 by PKA prevents calcium overload. Ubiquitously expressed. Expressed in dental tissues.

The protein localises to the mitochondrion inner membrane. It localises to the cell membrane. It carries out the reaction Ca(2+)(in) + 3 Na(+)(out) = Ca(2+)(out) + 3 Na(+)(in). It catalyses the reaction 3 Li(+)(out) + Ca(2+)(in) = 3 Li(+)(in) + Ca(2+)(out). Inhibited by the sodium/calcium exchanger inhibitor CGP-37157. Strongly inhibited by zinc. Its function is as follows. Mitochondrial sodium/calcium antiporter that mediates sodium-dependent calcium efflux from mitochondrion, by mediating the exchange of 3 sodium ions per 1 calcium ion. Plays a central role in mitochondrial calcium homeostasis by mediating mitochondrial calcium extrusion: calcium efflux is essential for mitochondrial function and cell survival, notably in cardiomyocytes. Regulates rates of glucose-dependent insulin secretion in pancreatic beta-cells during the first phase of insulin secretion: acts by mediating efflux of calcium from mitochondrion, thereby affecting cytoplasmic calcium responses. Required for store-operated Ca(2+) entry (SOCE) and Ca(2+) release-activated Ca(2+) (CRAC) channel regulation: sodium transport by SLC8B1 leads to promote calcium-shuttling that modulates mitochondrial redox status, thereby regulating SOCE activity. Involved in B-lymphocyte chemotaxis. Able to transport Ca(2+) in exchange of either Li(+) or Na(+), explaining how Li(+) catalyzes Ca(2+) exchange. In contrast to other members of the family its function is independent of K(+). In Mus musculus (Mouse), this protein is Mitochondrial sodium/calcium exchanger protein.